A 620-amino-acid polypeptide reads, in one-letter code: Transcription factor GTE11 (620 aa).

A disordered region spans residues 1 to 35 (MTVRNGGFPGDYNRNSFDSPGGCDDSPNASKDDET). One can recognise a Bromo domain in the interval 124 to 230 (TSTMLRMKQC…KFFEVRWKTI (107 aa)). Residues 270-351 (NSLLEPAKRV…EFLRENQKKD (82 aa)) form the NET domain. Residue serine 417 is modified to Phosphoserine. Residues 445 to 620 (EKRYRAALLK…GNEVEEGEID (176 aa)) form a transcription activation domain region. Residues 470 to 544 (NQNEKRDPET…MEKSVEINEN (75 aa)) adopt a coiled-coil conformation. 2 disordered regions span residues 491–511 (KKKEKARLQAEAKEAEEARRK) and 597–620 (EDEDESDMLAFPDPGNEVEEGEID).

Interacts with BT1, BT2 and BT4.

The protein localises to the nucleus. The protein is Transcription factor GTE11 (GTE11) of Arabidopsis thaliana (Mouse-ear cress).